The primary structure comprises 253 residues: MRILVTNDDGIHAPGLKVLEEIARGLSDDVWVVAPETDQSGVSHSLSLNDPLRLRKVAETRFAVKGTPSDCVIMGVRHILKERGPDLVLSGVNRGQNVAEDVTYSGTVAGAMEGTILGVRSIALSQAYGAGGRAHVKWQTASHHGARTIRRILEAGIEPGILVNVNFPDCEPEAVEGIAVVAQGMRNQQLLAIDERVDGRGNPYFWLAFAKARFEPGHGTDLKAIAENRIAVTPLRLDLTDEPTLTRFAQALG.

Positions 8, 9, 40, and 93 each coordinate a divalent metal cation.

Belongs to the SurE nucleotidase family. A divalent metal cation is required as a cofactor.

It localises to the cytoplasm. The enzyme catalyses a ribonucleoside 5'-phosphate + H2O = a ribonucleoside + phosphate. In terms of biological role, nucleotidase that shows phosphatase activity on nucleoside 5'-monophosphates. The sequence is that of 5'-nucleotidase SurE from Methylobacterium sp. (strain 4-46).